Reading from the N-terminus, the 39-residue chain is Potassium channel toxin alpha-KTx 2.16 (39 aa).

3 disulfide bridges follow: Cys-7/Cys-29, Cys-13/Cys-34, and Cys-17/Cys-36. An Isoleucine amide modification is found at Ile-39.

Belongs to the short scorpion toxin superfamily. Potassium channel inhibitor family. Alpha-KTx 02 subfamily. Expressed by the venom gland.

It is found in the secreted. In terms of biological role, blocks human voltage-gated potassium channels Kv1.2/KCNA2 (IC(50)=0.7 nM), Kv1.3/KCNA3 (IC(50)=26.2 nM) and blocks intermediate conductance calcium-activated potassium channel KCa3.1/KCNN4 (IC(50)=56 nM). This Centruroides tecomanus (Scorpion) protein is Potassium channel toxin alpha-KTx 2.16.